A 262-amino-acid chain; its full sequence is ATP synthase subunit delta (262 aa).

It belongs to the ATPase delta chain family. F-type ATPases have 2 components, F(1) - the catalytic core - and F(0) - the membrane proton channel. F(1) has five subunits: alpha(3), beta(3), gamma(1), delta(1), epsilon(1). F(0) has three main subunits: a(1), b(2) and c(10-14). The alpha and beta chains form an alternating ring which encloses part of the gamma chain. F(1) is attached to F(0) by a central stalk formed by the gamma and epsilon chains, while a peripheral stalk is formed by the delta and b chains.

It localises to the cell membrane. Functionally, f(1)F(0) ATP synthase produces ATP from ADP in the presence of a proton or sodium gradient. F-type ATPases consist of two structural domains, F(1) containing the extramembraneous catalytic core and F(0) containing the membrane proton channel, linked together by a central stalk and a peripheral stalk. During catalysis, ATP synthesis in the catalytic domain of F(1) is coupled via a rotary mechanism of the central stalk subunits to proton translocation. Its function is as follows. This protein is part of the stalk that links CF(0) to CF(1). It either transmits conformational changes from CF(0) to CF(1) or is implicated in proton conduction. The protein is ATP synthase subunit delta of Tropheryma whipplei (strain TW08/27) (Whipple's bacillus).